The following is a 320-amino-acid chain: Olfactory receptor 52W1 (320 aa).

At 1–30 (MAETLQLNSTFLHPNFFILTGFPGLGSAQT) the chain is on the extracellular side. N-linked (GlcNAc...) asparagine glycosylation occurs at asparagine 8. A helical membrane pass occupies residues 31–51 (WLTLVFGPIYLLALLGNGALP). Over 52–59 (AVVWIDST) the chain is Cytoplasmic. Residues 60–80 (LHQPMFLLLAILAATDLGLAT) form a helical membrane-spanning segment. The Extracellular portion of the chain corresponds to 81 to 104 (SIAPGLLAVLWLGPRSVPYAVCLV). Residues 105-125 (QMFFVHALTAMESGVLLAMAC) form a helical membrane-spanning segment. At 126-144 (DRAAAIGRPLHYPVLVTKA) the chain is on the cytoplasmic side. The chain crosses the membrane as a helical span at residues 145–165 (CVGYAALALALKAVAIVVPFP). The Extracellular segment spans residues 166–201 (LLVAKFEHFQAKTIGHTYCAHMAVVELVVGNTQATN). A helical membrane pass occupies residues 202 to 222 (LYGLALSLAISGMDILGITGS). At 223 to 242 (YGLIAHAVLQLPTREAHAKA) the chain is on the cytoplasmic side. Residues 243 to 263 (FGTCSSHICVILAFYIPGLFS) form a helical membrane-spanning segment. The Extracellular segment spans residues 264–279 (YLTHRFGHHTVPKPVH). A helical membrane pass occupies residues 280–300 (ILLSNIYLLLPPALNPLIYGA). Over 301-320 (RTKQIRDRLLETFTFRKSPL) the chain is Cytoplasmic.

Belongs to the G-protein coupled receptor 1 family.

The protein resides in the cell membrane. Functionally, odorant receptor. The polypeptide is Olfactory receptor 52W1 (OR52W1) (Homo sapiens (Human)).